The primary structure comprises 262 residues: Nickel import ATP-binding protein NikD (262 aa).

The ABC transporter domain maps to 6 to 249 (LAIEGLTATT…PGHEVTRMLV (244 aa)). 42-49 (GASGSGKS) provides a ligand contact to ATP.

The protein belongs to the ABC transporter superfamily. Nickel importer (TC 3.A.1.5.3) family. As to quaternary structure, the complex is composed of two ATP-binding proteins (NikD and NikE), two transmembrane proteins (NikB and NikC) and a solute-binding protein (NikA).

It localises to the cell inner membrane. It catalyses the reaction Ni(2+)(out) + ATP + H2O = Ni(2+)(in) + ADP + phosphate + H(+). Functionally, part of the ABC transporter complex NikABCDE involved in nickel import. Responsible for energy coupling to the transport system. This is Nickel import ATP-binding protein NikD from Brucella suis biovar 1 (strain 1330).